The primary structure comprises 152 residues: Aspartate carbamoyltransferase regulatory chain (152 aa).

Residues C108, C113, C136, and C139 each contribute to the Zn(2+) site.

This sequence belongs to the PyrI family. Contains catalytic and regulatory chains. Zn(2+) serves as cofactor.

Its function is as follows. Involved in allosteric regulation of aspartate carbamoyltransferase. The polypeptide is Aspartate carbamoyltransferase regulatory chain (Pyrococcus furiosus (strain ATCC 43587 / DSM 3638 / JCM 8422 / Vc1)).